We begin with the raw amino-acid sequence, 344 residues long: tRNA N6-adenosine threonylcarbamoyltransferase (344 aa).

Residues H110 and H114 each coordinate Fe cation. Substrate-binding positions include 132-136 (LVSGG), D166, G179, D183, and N278. D306 contributes to the Fe cation binding site.

The protein belongs to the KAE1 / TsaD family. It depends on Fe(2+) as a cofactor.

The protein localises to the cytoplasm. It catalyses the reaction L-threonylcarbamoyladenylate + adenosine(37) in tRNA = N(6)-L-threonylcarbamoyladenosine(37) in tRNA + AMP + H(+). Its function is as follows. Required for the formation of a threonylcarbamoyl group on adenosine at position 37 (t(6)A37) in tRNAs that read codons beginning with adenine. Is involved in the transfer of the threonylcarbamoyl moiety of threonylcarbamoyl-AMP (TC-AMP) to the N6 group of A37, together with TsaE and TsaB. TsaD likely plays a direct catalytic role in this reaction. This Nocardia farcinica (strain IFM 10152) protein is tRNA N6-adenosine threonylcarbamoyltransferase.